Here is a 241-residue protein sequence, read N- to C-terminus: tRNA pseudouridine synthase A (241 aa).

The Nucleophile role is filled by Asp51. Tyr110 contributes to the substrate binding site.

Belongs to the tRNA pseudouridine synthase TruA family. As to quaternary structure, homodimer.

It catalyses the reaction uridine(38/39/40) in tRNA = pseudouridine(38/39/40) in tRNA. Its function is as follows. Formation of pseudouridine at positions 38, 39 and 40 in the anticodon stem and loop of transfer RNAs. The chain is tRNA pseudouridine synthase A from Campylobacter jejuni subsp. doylei (strain ATCC BAA-1458 / RM4099 / 269.97).